Here is a 268-residue protein sequence, read N- to C-terminus: Tryptophan synthase alpha chain (268 aa).

Residues Glu40 and Asp51 each act as proton acceptor in the active site.

The protein belongs to the TrpA family. Tetramer of two alpha and two beta chains.

It carries out the reaction (1S,2R)-1-C-(indol-3-yl)glycerol 3-phosphate + L-serine = D-glyceraldehyde 3-phosphate + L-tryptophan + H2O. It functions in the pathway amino-acid biosynthesis; L-tryptophan biosynthesis; L-tryptophan from chorismate: step 5/5. The alpha subunit is responsible for the aldol cleavage of indoleglycerol phosphate to indole and glyceraldehyde 3-phosphate. The chain is Tryptophan synthase alpha chain from Geobacillus kaustophilus (strain HTA426).